Reading from the N-terminus, the 645-residue chain is UvrABC system protein C (645 aa).

The segment at 1 to 20 (MTDLPPHSSHHPADQGEPLV) is disordered. Positions 40–118 (YSPGVYRMLS…IKRMKPRFNI (79 aa)) constitute a GIY-YIG domain. Residues 228–263 (TELQQRLVAEMEQASQELNYERAASIRDRIRGFASI) form the UVR domain.

This sequence belongs to the UvrC family. Interacts with UvrB in an incision complex.

The protein localises to the cytoplasm. In terms of biological role, the UvrABC repair system catalyzes the recognition and processing of DNA lesions. UvrC both incises the 5' and 3' sides of the lesion. The N-terminal half is responsible for the 3' incision and the C-terminal half is responsible for the 5' incision. This Gluconobacter oxydans (strain 621H) (Gluconobacter suboxydans) protein is UvrABC system protein C.